The chain runs to 102 residues: MSEKSVEAAAELSAKDLKEKKDKVEEKAGRKERKKEVVEEEENGAEEEEEETAEDGEDDDEGDEEDEEEEEEEDEGPVRKRTAEEEDEADPKRQKTENGASA.

The segment at 1–102 (MSEKSVEAAA…RQKTENGASA (102 aa)) is disordered. Ser-2 is modified (N-acetylserine). Ser-2 carries the post-translational modification Phosphoserine. N6-acetyllysine is present on Lys-4. 2 positions are modified to phosphoserine: Ser-5 and Ser-13. A compositionally biased stretch (basic and acidic residues) spans 13–37 (SAKDLKEKKDKVEEKAGRKERKKEV). Lys-15 is subject to N6-acetyllysine. Positions 38–75 (VEEEENGAEEEEEETAEDGEDDDEGDEEDEEEEEEEDE) are enriched in acidic residues. Thr-52 is subject to Phosphothreonine. Lys-92 carries the N6-acetyllysine modification.

Belongs to the pro/parathymosin family.

Its function is as follows. Parathymosin may mediate immune function by blocking the effect of prothymosin alpha which confers resistance to certain opportunistic infections. In Rattus norvegicus (Rat), this protein is Parathymosin (Ptms).